The chain runs to 304 residues: Quinolinate synthase 1 (304 aa).

Iminosuccinate-binding residues include histidine 24 and serine 41. Cysteine 86 serves as a coordination point for [4Fe-4S] cluster. Residues 112 to 114 and serine 129 each bind iminosuccinate; that span reads YVN. Cysteine 171 is a [4Fe-4S] cluster binding site. Iminosuccinate contacts are provided by residues 197–199 and threonine 214; that span reads HPE. A [4Fe-4S] cluster-binding site is contributed by cysteine 259.

Belongs to the quinolinate synthase family. Type 2 subfamily. It depends on [4Fe-4S] cluster as a cofactor.

The protein localises to the cytoplasm. The enzyme catalyses iminosuccinate + dihydroxyacetone phosphate = quinolinate + phosphate + 2 H2O + H(+). It participates in cofactor biosynthesis; NAD(+) biosynthesis; quinolinate from iminoaspartate: step 1/1. In terms of biological role, catalyzes the condensation of iminoaspartate with dihydroxyacetone phosphate to form quinolinate. The sequence is that of Quinolinate synthase 1 from Methanosarcina acetivorans (strain ATCC 35395 / DSM 2834 / JCM 12185 / C2A).